Consider the following 1368-residue polypeptide: DNA-directed RNA polymerase subunit beta (1368 aa).

Belongs to the RNA polymerase beta chain family. As to quaternary structure, the RNAP catalytic core consists of 2 alpha, 1 beta, 1 beta' and 1 omega subunit. When a sigma factor is associated with the core the holoenzyme is formed, which can initiate transcription.

The catalysed reaction is RNA(n) + a ribonucleoside 5'-triphosphate = RNA(n+1) + diphosphate. In terms of biological role, DNA-dependent RNA polymerase catalyzes the transcription of DNA into RNA using the four ribonucleoside triphosphates as substrates. In Legionella pneumophila subsp. pneumophila (strain Philadelphia 1 / ATCC 33152 / DSM 7513), this protein is DNA-directed RNA polymerase subunit beta.